We begin with the raw amino-acid sequence, 213 residues long: 2,3-bisphosphoglycerate-dependent phosphoglycerate mutase (213 aa).

Substrate contacts are provided by residues 8-15, 21-22, R58, 84-87, K95, 111-112, and 155-156; these read RHGQSEWN, TG, ERNY, RR, and GN. H9 serves as the catalytic Tele-phosphohistidine intermediate. The active-site Proton donor/acceptor is the E84.

The protein belongs to the phosphoglycerate mutase family. BPG-dependent PGAM subfamily.

The enzyme catalyses (2R)-2-phosphoglycerate = (2R)-3-phosphoglycerate. The protein operates within carbohydrate degradation; glycolysis; pyruvate from D-glyceraldehyde 3-phosphate: step 3/5. Catalyzes the interconversion of 2-phosphoglycerate and 3-phosphoglycerate. This is 2,3-bisphosphoglycerate-dependent phosphoglycerate mutase from Cytophaga hutchinsonii (strain ATCC 33406 / DSM 1761 / CIP 103989 / NBRC 15051 / NCIMB 9469 / D465).